Here is a 78-residue protein sequence, read N- to C-terminus: Large ribosomal subunit protein bL28 (78 aa).

It belongs to the bacterial ribosomal protein bL28 family.

The protein is Large ribosomal subunit protein bL28 of Haemophilus influenzae (strain 86-028NP).